The chain runs to 292 residues: 2-(5''-triphosphoribosyl)-3'-dephosphocoenzyme-A synthase (292 aa).

This sequence belongs to the CitG/MdcB family.

It catalyses the reaction 3'-dephospho-CoA + ATP = 2'-(5''-triphospho-alpha-D-ribosyl)-3'-dephospho-CoA + adenine. Its function is as follows. Catalyzes the formation of 2-(5''-triphosphoribosyl)-3'-dephosphocoenzyme-A, the precursor of the prosthetic group of the holo-acyl carrier protein (gamma chain) of citrate lyase, from ATP and dephospho-CoA. The protein is 2-(5''-triphosphoribosyl)-3'-dephosphocoenzyme-A synthase of Escherichia coli (strain UTI89 / UPEC).